Here is a 496-residue protein sequence, read N- to C-terminus: Glycogen synthase (496 aa).

Lysine 24 contributes to the ADP-alpha-D-glucose binding site.

The protein belongs to the glycosyltransferase 1 family. Bacterial/plant glycogen synthase subfamily.

The catalysed reaction is [(1-&gt;4)-alpha-D-glucosyl](n) + ADP-alpha-D-glucose = [(1-&gt;4)-alpha-D-glucosyl](n+1) + ADP + H(+). It functions in the pathway glycan biosynthesis; glycogen biosynthesis. Synthesizes alpha-1,4-glucan chains using ADP-glucose. This is Glycogen synthase from Nitrosospira multiformis (strain ATCC 25196 / NCIMB 11849 / C 71).